A 172-amino-acid chain; its full sequence is 3-hydroxydecanoyl-[acyl-carrier-protein] dehydratase (172 aa).

His-71 is an active-site residue.

Belongs to the thioester dehydratase family. FabA subfamily. Homodimer.

It is found in the cytoplasm. The catalysed reaction is a (3R)-hydroxyacyl-[ACP] = a (2E)-enoyl-[ACP] + H2O. It carries out the reaction (3R)-hydroxydecanoyl-[ACP] = (2E)-decenoyl-[ACP] + H2O. It catalyses the reaction (2E)-decenoyl-[ACP] = (3Z)-decenoyl-[ACP]. Its pathway is lipid metabolism; fatty acid biosynthesis. Necessary for the introduction of cis unsaturation into fatty acids. Catalyzes the dehydration of (3R)-3-hydroxydecanoyl-ACP to E-(2)-decenoyl-ACP and then its isomerization to Z-(3)-decenoyl-ACP. Can catalyze the dehydratase reaction for beta-hydroxyacyl-ACPs with saturated chain lengths up to 16:0, being most active on intermediate chain length. The protein is 3-hydroxydecanoyl-[acyl-carrier-protein] dehydratase of Pectobacterium atrosepticum (strain SCRI 1043 / ATCC BAA-672) (Erwinia carotovora subsp. atroseptica).